The following is a 91-amino-acid chain: uncharacterized protein (91 aa).

A helical transmembrane segment spans residues 50–70 (FGFFGGPFIGGLAGGLIGSAL).

Its subcellular location is the cell membrane. This is an uncharacterized protein from Bacillus subtilis (strain 168).